A 396-amino-acid polypeptide reads, in one-letter code: MRNMQEKGVSEKEILEELKKYRSLDLKYEDGNIFGSMCSNVLPITRKIVDIFLETNLGDPGLFKGTKLLEEKAVALLGSLLNNKDAYGHIVSGGTEANLMALRCIKNIWREKRRKGLSKNEHPKIIVPITAHFSFEKGREMMDLEYIYAPIKEDYTIDEKFVKDAVEDYDVDGIIGIAGTTELGTIDNIEELSKIAKENNIYIHVDAAFGGLVIPFLDDKYKKKGVNYKFDFSLGVDSITIDPHKMGHCPIPSGGILFKDIGYKRYLDVDAPYLTETRQATILGTRVGFGGACTYAVLRYLGREGQRKIVNECMENTLYLYKKLKENNFKPVIEPILNIVAIEDEDYKEVCKKLRDRGIYVSVCNCVKALRIVVMPHIKREHIDNFIEILNSIKRD.

K245 carries the N6-(pyridoxal phosphate)lysine modification.

It belongs to the group II decarboxylase family. MfnA subfamily. As to quaternary structure, homodimer. It depends on pyridoxal 5'-phosphate as a cofactor.

It catalyses the reaction L-tyrosine + H(+) = tyramine + CO2. The catalysed reaction is L-aspartate + H(+) = beta-alanine + CO2. It functions in the pathway cofactor biosynthesis; methanofuran biosynthesis. It participates in cofactor biosynthesis; coenzyme A biosynthesis. Its activity is regulated as follows. Inhibited by hydroxylamine and O-methylhydroxylamine. Functionally, catalyzes the decarboxylation of L-tyrosine to produce tyramine for methanofuran biosynthesis. Can also catalyze the decarboxylation of L-aspartate to produce beta-alanine for coenzyme A (CoA) biosynthesis. The polypeptide is L-tyrosine/L-aspartate decarboxylase (Methanocaldococcus jannaschii (strain ATCC 43067 / DSM 2661 / JAL-1 / JCM 10045 / NBRC 100440) (Methanococcus jannaschii)).